The sequence spans 309 residues: MNTTKRILAIQSSVCHGYVGNRAATFPLQLLGWDVDAIPTVELSNHAGYPIVKGRTLSAEQILDLYKGVSAANPSGYECLLTGYARGIGSVKAIMEIVRSVKSKNKKAFWVFDPVLGDNGRLYVEESIIPLYREMLPFADLITPNGFEAEILSGMRINSIDTAFKCVECLQQKYKVPRVVISSFVVEENGVEKLYCIGSSIYSKSFFVLIPVIPGIFRGTGDLFTALMAAHIAESPDCTESLASIKEDKLKKSVEMALSSVHEVIQKTADRISALGVEEYHPAYAELCIVNSQNSIIAPSKLFEAVYYY.

Substrate contacts are provided by S12 and Y123. ATP is bound by residues S182 to S183 and L209 to G221. D222 serves as a coordination point for substrate.

The protein belongs to the pyridoxine kinase family. The cofactor is a divalent metal cation.

It localises to the cytoplasm. It is found in the nucleus. The enzyme catalyses pyridoxal + ATP = pyridoxal 5'-phosphate + ADP + H(+). Required for synthesis of pyridoxal-5-phosphate from vitamin B6. The chain is Putative pyridoxal kinase C6F6.11c from Schizosaccharomyces pombe (strain 972 / ATCC 24843) (Fission yeast).